The chain runs to 483 residues: Keratin, type II cytoskeletal 7 (483 aa).

Ser-2 carries the N-acetylserine modification. Ser-2, Ser-6, and Ser-7 each carry phosphoserine. The head stretch occupies residues 2 to 107 (SVQFSSQTFS…DPQIQQVRKE (106 aa)). A glycan (O-linked (GlcNAc) serine) is linked at Ser-12. Positions 14 to 37 (SAAFPRRGGQGRLSSVSSRAGSVS) are disordered. Arg-20 carries the post-translational modification Dimethylated arginine; alternate. At Arg-20 the chain carries Omega-N-methylarginine; alternate. Positions 25 to 37 (RLSSVSSRAGSVS) are enriched in low complexity. A phosphoserine mark is found at Ser-63 and Ser-88. Residues 107 to 143 (EEREQIKTLNNKFASFIDKVRFLEQQNQMLETKWRLL) form a coil 1A region. An IF rod domain is found at 108–420 (EREQIKTLNN…KLLEGEESRL (313 aa)). The residue at position 114 (Thr-114) is a Phosphothreonine. The segment at 144-161 (QEQKSSKGSSLPAIFEAH) is linker 1. Residue Lys-147 forms a Glycyl lysine isopeptide (Lys-Gly) (interchain with G-Cter in SUMO2) linkage. The tract at residues 162-253 (IANLRRQLDG…TLYEMELNEL (92 aa)) is coil 1B. Residue Lys-196 is modified to N6-acetyllysine. The tract at residues 254–277 (QTQISDTSVVLSMDNSRSLDLDSI) is linker 12. Ser-269 and Ser-271 each carry phosphoserine. Residues 278 to 416 (ISEVKAQYED…ATYRKLLEGE (139 aa)) are coil 2. Glycyl lysine isopeptide (Lys-Gly) (interchain with G-Cter in SUMO2) cross-links involve residues Lys-282 and Lys-303. Thr-306 carries the phosphothreonine modification. Residues Lys-313 and Lys-348 each participate in a glycyl lysine isopeptide (Lys-Gly) (interchain with G-Cter in SUMO2) cross-link. A tail region spans residues 417–483 (ESRLSGDGVG…TSSSRRSVRN (67 aa)).

The protein belongs to the intermediate filament family. As to quaternary structure, heterotetramer of two type I and two type II keratins. Interacts with eukaryotic translation initiator factor 3 (eIF3) subunit EIF3S10. Interacts with GPER1. Post-translationally, arg-20 is dimethylated, probably to asymmetric dimethylarginine.

Functionally, blocks interferon-dependent interphase and stimulates DNA synthesis in cells. In Potorous tridactylus (Potoroo), this protein is Keratin, type II cytoskeletal 7.